The chain runs to 298 residues: Lipoyl synthase 1 (298 aa).

[4Fe-4S] cluster is bound by residues Cys34, Cys39, Cys45, Cys60, Cys64, Cys67, and Ser274. In terms of domain architecture, Radical SAM core spans 46–263 (FYQGTATFLM…RRLGESMGFL (218 aa)).

This sequence belongs to the radical SAM superfamily. Lipoyl synthase family. [4Fe-4S] cluster is required as a cofactor.

The protein resides in the cytoplasm. It catalyses the reaction [[Fe-S] cluster scaffold protein carrying a second [4Fe-4S](2+) cluster] + N(6)-octanoyl-L-lysyl-[protein] + 2 oxidized [2Fe-2S]-[ferredoxin] + 2 S-adenosyl-L-methionine + 4 H(+) = [[Fe-S] cluster scaffold protein] + N(6)-[(R)-dihydrolipoyl]-L-lysyl-[protein] + 4 Fe(3+) + 2 hydrogen sulfide + 2 5'-deoxyadenosine + 2 L-methionine + 2 reduced [2Fe-2S]-[ferredoxin]. It participates in protein modification; protein lipoylation via endogenous pathway; protein N(6)-(lipoyl)lysine from octanoyl-[acyl-carrier-protein]: step 2/2. Catalyzes the radical-mediated insertion of two sulfur atoms into the C-6 and C-8 positions of the octanoyl moiety bound to the lipoyl domains of lipoate-dependent enzymes, thereby converting the octanoylated domains into lipoylated derivatives. In Thermosynechococcus vestitus (strain NIES-2133 / IAM M-273 / BP-1), this protein is Lipoyl synthase 1.